The chain runs to 116 residues: Large ribosomal subunit protein bL19 (116 aa).

The protein belongs to the bacterial ribosomal protein bL19 family.

Functionally, this protein is located at the 30S-50S ribosomal subunit interface and may play a role in the structure and function of the aminoacyl-tRNA binding site. This chain is Large ribosomal subunit protein bL19, found in Pseudomonas fluorescens (strain Pf0-1).